Here is a 529-residue protein sequence, read N- to C-terminus: Amino acid transporter heavy chain SLC3A2 (529 aa).

Positions 1–20 are disordered; that stretch reads MSQDTEVDMKEVELNELEPE. The Cytoplasmic portion of the chain corresponds to 1-84; it reads MSQDTEVDMK…SPGWVRTRWA (84 aa). Serine 2 bears the Phosphoserine mark. Residue threonine 5 is modified to Phosphothreonine. Basic and acidic residues predominate over residues 7–20; the sequence is VDMKEVELNELEPE. Lysine 49 participates in a covalent cross-link: Glycyl lysine isopeptide (Lys-Gly) (interchain with G-Cter in ubiquitin). Serine 65 carries the phosphoserine modification. Lysine 66 participates in a covalent cross-link: Glycyl lysine isopeptide (Lys-Gly) (interchain with G-Cter in SUMO2). A helical; Signal-anchor for type II membrane protein transmembrane segment spans residues 85-105; the sequence is LLLLFWLGWIGMLAGAVVIIV. Topologically, residues 106–529 are extracellular; sequence RAPRCRELPV…GLLLHFPYVA (424 aa). The N-linked (GlcNAc...) asparagine glycan is linked to asparagine 266. Serine 307 and serine 309 each carry phosphoserine. N-linked (GlcNAc...) asparagine glycosylation is found at asparagine 325 and asparagine 405. Serine 426 carries the phosphoserine modification.

It belongs to the SLC3A transporter family. Disulfide-linked heterodimer with a non-glycosylated light chain (SLC7A5, SLC7A6, SLC7A7, SLC7A8, SLC7A10 or SLC7A11). Interacts with TLCD3A/CT120 and ICAM1. Constitutively and specifically associates with beta-1 integrins (alpha-2/beta-1, alpha-3/beta-1, alpha-5/beta-1 and alpha-6/beta-1), but minimally with alpha-4/beta-1. Interacts with LAPTM4B; recruits SLC3A2 and SLC7A5 to lysosomes to promote leucine uptake into these organelles and is required for mTORC1 activation. In terms of processing, phosphorylation on Ser-307 or Ser-309 and on Ser-426 by ecto-protein kinases favors heterotypic cell-cell interactions. Post-translationally, N-glycosylated; N-glycosylation is crucial for trafficking and stability of SLC3A2 to the plasma membrane.

The protein localises to the apical cell membrane. The protein resides in the cell membrane. It localises to the cell junction. Its subcellular location is the lysosome membrane. It is found in the melanosome. The protein localises to the basolateral cell membrane. Functionally, acts as a chaperone that facilitates biogenesis and trafficking of functional transporters heterodimers to the plasma membrane. Forms heterodimer with SLC7 family transporters (SLC7A5, SLC7A6, SLC7A7, SLC7A8, SLC7A10 and SLC7A11), a group of amino-acid antiporters. Heterodimers function as amino acids exchangers, the specificity of the substrate depending on the SLC7A subunit. Heterodimers formed by SLC3A2/SLC7A6 or SLC3A2/SLC7A7 mediate the uptake of dibasic amino acids. Heterodimer SLC3A2/SLC7A11 functions as an antiporter by mediating the exchange of extracellular anionic L-cystine and intracellular L-glutamate across the cellular plasma membrane. SLC3A2/SLC7A10 translocates small neutral L- and D-amino acids across the plasma membrane. SLC3A2/SLC75 or SLC3A2/SLC7A8 translocates neutral amino acids with broad specificity, thyroid hormones and L-DOPA. SLC3A2 is essential for plasma membrane localization, stability, and the transport activity of SLC7A5 and SLC7A8. When associated with LAPTM4B, the heterodimer SLC7A5 is recruited to lysosomes to promote leucine uptake into these organelles, and thereby mediates mTORC1 activation. Modulates integrin-related signaling and is essential for integrin-dependent cell spreading, migration and tumor progression. The protein is Amino acid transporter heavy chain SLC3A2 of Oryctolagus cuniculus (Rabbit).